A 121-amino-acid polypeptide reads, in one-letter code: Basic phospholipase A2 homolog BnSP-7 (121 aa).

Intrachain disulfides connect C26–C115, C28–C44, C43–C95, C49–C121, C50–C88, C57–C81, and C75–C86. Positions 105–117 are important for membrane-damaging activities in eukaryotes and bacteria; heparin-binding; the sequence is KKYRYHLKPFCKK.

It belongs to the phospholipase A2 family. Group II subfamily. K49 sub-subfamily. Homodimer; non-covalently linked (probable alternative/compact dimer conformation in solution). Expressed by the venom gland.

The protein resides in the secreted. Its activity is regulated as follows. Heparin inhibits the neuromuscular effect, myotoxin activity and edema-inducing effects. Bromophenacyl bromide (BPB) inhibits the neuromuscular effect, the myotoxin activity and edema-inducing effects. Its function is as follows. Snake venom phospholipase A2 (PLA2) that lacks enzymatic activity. Is myotoxic and displays edema-inducing activity. Displays bactericidal activity and promotes the blockage of the neuromuscular contraction of the chick biventer cervicis muscle. Also disrupts artificial membranes, and provokes tissue damages characterized by edema, necrosis and inflammation. May act as pro-inflammatory mediators, inducing metalloproteinase and cytokine production from the inflammatory and satellite cells. A model of myotoxic mechanism has been proposed: an apo Lys49-PLA2 is activated by the entrance of a hydrophobic molecule (e.g. fatty acid) at the hydrophobic channel of the protein leading to a reorientation of a monomer. This reorientation causes a transition between 'inactive' to 'active' states, causing alignment of C-terminal and membrane-docking sites (MDoS) side-by-side and putting the membrane-disruption sites (MDiS) in the same plane, exposed to solvent and in a symmetric position for both monomers. The MDoS region stabilizes the toxin on membrane by the interaction of charged residues with phospholipid head groups. Subsequently, the MDiS region destabilizes the membrane with penetration of hydrophobic residues. This insertion causes a disorganization of the membrane, allowing an uncontrolled influx of ions (i.e. calcium and sodium), and eventually triggering irreversible intracellular alterations and cell death. The protein is Basic phospholipase A2 homolog BnSP-7 of Bothrops pauloensis (Neuwied's lancehead).